Consider the following 390-residue polypeptide: Cold-responsive protein kinase 1 (390 aa).

The Protein kinase domain occupies 41–320; sequence FSAENKIGEG…VRLLTGEKDI (280 aa). ATP-binding positions include 47–55 and Lys-69; that span reads IGEGGFGSV. Tyr-114 carries the post-translational modification Phosphotyrosine. Residue Asp-169 is the Proton acceptor of the active site. Residues Ser-173 and Ser-202 each carry the phosphoserine modification. Thr-203 and Thr-208 each carry phosphothreonine. Tyr-216 carries the phosphotyrosine modification. The segment at 345–390 is disordered; that stretch reads TKTEQVNRQNYTNPSSSSNGSSRDHSNAYSSGASSANAGNTFSSTI. Over residues 354–390 the composition is skewed to low complexity; sequence NYTNPSSSSNGSSRDHSNAYSSGASSANAGNTFSSTI.

Belongs to the protein kinase superfamily. Ser/Thr protein kinase family. In terms of assembly, interacts with and phosphorylates 14-3-3 proteins. Binds to GRF6 at the plasma membrane. In terms of processing, autophosphorylated.

It localises to the cell membrane. The enzyme catalyses L-seryl-[protein] + ATP = O-phospho-L-seryl-[protein] + ADP + H(+). It catalyses the reaction L-threonyl-[protein] + ATP = O-phospho-L-threonyl-[protein] + ADP + H(+). Activated by cold. Its function is as follows. Negative regulator of freezing tolerance that phosphorylates 14-3-3 proteins (e.g. GRF6) thus triggering their translocation from the cytosol to the nucleus in response to cold stress. The chain is Cold-responsive protein kinase 1 from Arabidopsis thaliana (Mouse-ear cress).